Reading from the N-terminus, the 101-residue chain is MIPGELLIEDGEIELNAGRATVTLSVANTGDRPIQVGSHYHFFETNPALRFDRDKARGMRLDIAAGTAVRFEPGQTRDVQLVALAGKRVVYGFRGDVMGKL.

Belongs to the urease beta subunit family. As to quaternary structure, heterotrimer of UreA (gamma), UreB (beta) and UreC (alpha) subunits. Three heterotrimers associate to form the active enzyme.

It localises to the cytoplasm. It carries out the reaction urea + 2 H2O + H(+) = hydrogencarbonate + 2 NH4(+). It participates in nitrogen metabolism; urea degradation; CO(2) and NH(3) from urea (urease route): step 1/1. The sequence is that of Urease subunit beta from Rhodopseudomonas palustris (strain HaA2).